A 323-amino-acid chain; its full sequence is Annexin A3 (323 aa).

A2 carries the N-acetylalanine modification. 4 Annexin repeats span residues 18-89, 90-161, 173-245, and 249-320; these read FSPS…ALVT, PPAV…TLAD, HLAK…AIVN, and NTPA…KICG. Residue T267 is modified to Phosphothreonine.

The protein belongs to the annexin family.

Functionally, inhibitor of phospholipase A2, also possesses anti-coagulant properties. Also cleaves the cyclic bond of inositol 1,2-cyclic phosphate to form inositol 1-phosphate. The protein is Annexin A3 (ANXA3) of Homo sapiens (Human).